We begin with the raw amino-acid sequence, 214 residues long: Adenylate kinase (214 aa).

Glycine 10 to threonine 15 contacts ATP. The interval serine 30–valine 59 is NMP. Residues threonine 31, arginine 36, glutamate 57–valine 59, glycine 85–arginine 88, and glutamine 92 contribute to the AMP site. Positions glycine 122–aspartate 159 are LID. ATP contacts are provided by residues arginine 123 and isoleucine 132–tyrosine 133. Residues arginine 156 and arginine 167 each contribute to the AMP site. Residue glutamine 200 coordinates ATP.

The protein belongs to the adenylate kinase family. As to quaternary structure, monomer.

The protein resides in the cytoplasm. The enzyme catalyses AMP + ATP = 2 ADP. The protein operates within purine metabolism; AMP biosynthesis via salvage pathway; AMP from ADP: step 1/1. In terms of biological role, catalyzes the reversible transfer of the terminal phosphate group between ATP and AMP. Plays an important role in cellular energy homeostasis and in adenine nucleotide metabolism. The sequence is that of Adenylate kinase from Buchnera aphidicola subsp. Schizaphis graminum (strain Sg).